We begin with the raw amino-acid sequence, 449 residues long: MYRAKRAALSPKVKRRVGKYELGRTIGEGTFAKVRFAKNTENDEPVAIKILDKEKVQKHRLVEQIRREICTMKLVKHPNVVRLFEVMGSKARIFIVLEYVTGGELFEIIATNGRLKEEEARKYFQQLINAVDYCHSRGVYHRDLKLENLLLDASGNLKVSDFGLSALTEQVKADGLLHTTCGTPNYVAPEVIEDRGYDGAAADIWSCGVILYVLLAGFLPFEDDNIIALYKKISEAQFTCPSWFSTGAKKLITRILDPNPTTRITISQILEDPWFKKGYKPPVFDEKYETSFDDVDAAFGDSEDRHVKEETEDQPTSMNAFELISLNQALNLDNLFEAKKEYKRETRFTSQCPPKEIITKIEEAAKPLGFDIQKKNYKMRMENLKAGRKGNLNVATEVFQVAPSLHVVELKKAKGDTLEFQKFYRTLSTQLKDVVWKCDGEVEGNGAAA.

Residues 20 to 275 (YELGRTIGEG…ISQILEDPWF (256 aa)) form the Protein kinase domain. ATP is bound by residues 26 to 34 (IGEGTFAKV) and K49. The Proton acceptor role is filled by D143. The segment at 161 to 190 (DFGLSALTEQVKADGLLHTTCGTPNYVAPE) is activation loop. The region spanning 313-337 (DQPTSMNAFELISLNQALNLDNLFE) is the NAF domain.

It belongs to the protein kinase superfamily. CAMK Ser/Thr protein kinase family. SNF1 subfamily. May interact with CBL3. It depends on Mn(2+) as a cofactor. Post-translationally, autophosphorylated. In terms of tissue distribution, highly expressed in leaf blade and leaf sheath, but not in other tissues.

It catalyses the reaction L-seryl-[protein] + ATP = O-phospho-L-seryl-[protein] + ADP + H(+). The enzyme catalyses L-threonyl-[protein] + ATP = O-phospho-L-threonyl-[protein] + ADP + H(+). Its function is as follows. Involved in cold stress tolerance. CIPK serine-threonine protein kinases interact with CBL proteins. Binding of a CBL protein to the regulatory NAF domain of CIPK protein lead to the activation of the kinase in a calcium-dependent manner. This chain is CBL-interacting protein kinase 31 (CIPK31), found in Oryza sativa subsp. japonica (Rice).